Reading from the N-terminus, the 238-residue chain is tRNA (guanine-N(1)-)-methyltransferase (238 aa).

Residue 132-137 (IGDYVL) coordinates S-adenosyl-L-methionine.

It belongs to the RNA methyltransferase TrmD family. Homodimer.

The protein localises to the cytoplasm. It catalyses the reaction guanosine(37) in tRNA + S-adenosyl-L-methionine = N(1)-methylguanosine(37) in tRNA + S-adenosyl-L-homocysteine + H(+). Functionally, specifically methylates guanosine-37 in various tRNAs. The protein is tRNA (guanine-N(1)-)-methyltransferase of Nitrobacter hamburgensis (strain DSM 10229 / NCIMB 13809 / X14).